Reading from the N-terminus, the 1857-residue chain is U3 small nucleolar RNA-associated protein 10 (1857 aa).

Residues 267 to 287 (LTAYSIISVLSSLVPLSADLV) form a helical membrane-spanning segment. An HEAT repeat occupies 1817–1855 (LIPYIAELLEDDDEEVELEVRNGLVRVIENVLGEPLDRY).

It belongs to the HEATR1/UTP10 family. Component of the ribosomal small subunit (SSU) processome.

The protein localises to the nucleus. It is found in the nucleolus. It localises to the membrane. Functionally, involved in nucleolar processing of pre-18S ribosomal RNA. Involved in ribosome biosynthesis. The protein is U3 small nucleolar RNA-associated protein 10 of Debaryomyces hansenii (strain ATCC 36239 / CBS 767 / BCRC 21394 / JCM 1990 / NBRC 0083 / IGC 2968) (Yeast).